Reading from the N-terminus, the 24-residue chain is Brevinin-1GRa (24 aa).

As to expression, expressed by the skin glands.

The protein localises to the secreted. Its function is as follows. Antimicrobial peptide active against the Gram-positive bacterium S.aureus (MIC=12.5 uM) and against the Gram-negative bacteria E.coli (MIC=25 uM). This is Brevinin-1GRa from Odorrana grahami (Yunnanfu frog).